Here is a 68-residue protein sequence, read N- to C-terminus: Preprofallaxidin-5 (68 aa).

Positions 1–22 (MASLKKSLFLVLFLGFVSLSIC) are cleaved as a signal peptide. A propeptide spanning residues 23 to 51 (EEEKREDKEDEGENEEAEENHEERSEEKR) is cleaved from the precursor. A disordered region spans residues 24–50 (EEKREDKEDEGENEEAEENHEERSEEK). A compositionally biased stretch (acidic residues) spans 30–42 (KEDEGENEEAEEN). Residue Leu64 is modified to Leucine amide. Residue Ser68 is a propeptide.

It belongs to the frog skin active peptide (FSAP) family. Brevinin subfamily. In terms of tissue distribution, expressed by the skin glands.

It localises to the secreted. The sequence is that of Preprofallaxidin-5 from Litoria fallax (Eastern dwarf tree frog).